We begin with the raw amino-acid sequence, 417 residues long: Serine hydroxymethyltransferase (417 aa).

Residues L121 and 125-127 (GHL) each bind (6S)-5,6,7,8-tetrahydrofolate. Position 229 is an N6-(pyridoxal phosphate)lysine (K229). 355–357 (SPF) is a binding site for (6S)-5,6,7,8-tetrahydrofolate.

This sequence belongs to the SHMT family. Homodimer. Pyridoxal 5'-phosphate serves as cofactor.

Its subcellular location is the cytoplasm. It carries out the reaction (6R)-5,10-methylene-5,6,7,8-tetrahydrofolate + glycine + H2O = (6S)-5,6,7,8-tetrahydrofolate + L-serine. The protein operates within one-carbon metabolism; tetrahydrofolate interconversion. It functions in the pathway amino-acid biosynthesis; glycine biosynthesis; glycine from L-serine: step 1/1. Its function is as follows. Catalyzes the reversible interconversion of serine and glycine with tetrahydrofolate (THF) serving as the one-carbon carrier. This reaction serves as the major source of one-carbon groups required for the biosynthesis of purines, thymidylate, methionine, and other important biomolecules. Also exhibits THF-independent aldolase activity toward beta-hydroxyamino acids, producing glycine and aldehydes, via a retro-aldol mechanism. The polypeptide is Serine hydroxymethyltransferase (Buchnera aphidicola subsp. Schizaphis graminum (strain Sg)).